Here is a 196-residue protein sequence, read N- to C-terminus: ATP-dependent Clp protease proteolytic subunit (196 aa).

S96 acts as the Nucleophile in catalysis. H121 is a catalytic residue.

Belongs to the peptidase S14 family. Fourteen ClpP subunits assemble into 2 heptameric rings which stack back to back to give a disk-like structure with a central cavity, resembling the structure of eukaryotic proteasomes.

Its subcellular location is the cytoplasm. The catalysed reaction is Hydrolysis of proteins to small peptides in the presence of ATP and magnesium. alpha-casein is the usual test substrate. In the absence of ATP, only oligopeptides shorter than five residues are hydrolyzed (such as succinyl-Leu-Tyr-|-NHMec, and Leu-Tyr-Leu-|-Tyr-Trp, in which cleavage of the -Tyr-|-Leu- and -Tyr-|-Trp bonds also occurs).. Cleaves peptides in various proteins in a process that requires ATP hydrolysis. Has a chymotrypsin-like activity. Plays a major role in the degradation of misfolded proteins. This Streptococcus suis (strain 98HAH33) protein is ATP-dependent Clp protease proteolytic subunit.